The primary structure comprises 764 residues: Complement factor B (764 aa).

An N-terminal signal peptide occupies residues 1–25 (MGSNLSPQLCLMPFILGLLSGGVTT). 3 consecutive Sushi domains span residues 35-100 (GSCS…ECRA), 101-160 (IHCP…ICDN), and 163-220 (GYCS…SCQD). 6 cysteine pairs are disulfide-bonded: Cys37–Cys76, Cys62–Cys98, Cys103–Cys145, Cys131–Cys158, Cys165–Cys205, and Cys191–Cys218. 2 N-linked (GlcNAc...) asparagine glycosylation sites follow: Asn122 and Asn142. In terms of domain architecture, VWFA spans 270 to 469 (NIYLVLDGSD…NLEDVFYQMI (200 aa)). Mg(2+) contacts are provided by Ser278 and Ser280. The N-linked (GlcNAc...) asparagine glycan is linked to Asn285. Residue Thr353 coordinates Mg(2+). Asn378 carries an N-linked (GlcNAc...) asparagine glycan. Residues 477–757 (LCGMVWEHRK…VLPWLKEKLQ (281 aa)) enclose the Peptidase S1 domain. 5 disulfides stabilise this stretch: Cys478/Cys596, Cys511/Cys527, Cys599/Cys615, Cys656/Cys682, and Cys695/Cys725. Residues His526 and Asp576 each act as charge relay system in the active site. Ser699 functions as the Charge relay system in the catalytic mechanism.

It belongs to the peptidase S1 family. Monomer. Interacts with complement C3b; this interaction is dependent on the presence of Mg(2+). As to quaternary structure, catalytic component of the C3 convertase of the alternative complement pathway, also named C3bBb, composed of complement factor B Bb and complement C3b. Catalytic component of the C5 convertase of the alternative complement pathway, also named C3bBb3b, composed of complement factor B Bb and additional molecules of complement C3b. Interacts to CFP; this interaction contributes to the stabilization of the active C3-convertase enzyme complex. Mg(2+) is required as a cofactor. It depends on Mn(2+) as a cofactor. Post-translationally, cleaved by CFD following activation of the alternative complement system, generating Ba and Bb chains. Cleavage and activation takes place when CFB is already associated with complement C3b.

It localises to the secreted. Its subcellular location is the cell surface. The catalysed reaction is Cleavage of Arg-|-Ser bond in complement component C3 alpha-chain to yield C3a and C3b, and Arg-|-Xaa bond in complement component C5 alpha-chain to yield C5a and C5b.. Precursor of the catalytic component of the C3 and C5 convertase complexes of the alternative pathway of the complement system, a cascade of proteins that leads to phagocytosis and breakdown of pathogens and signaling that strengthens the adaptive immune system. The alternative complement pathway acts as an amplification loop that enhances other complement pathways (classical, lectin and GZMK) by promoting formation of additional C3 and C5 convertases. CFB is cleaved and activated by CFD to generate Ba and Bb chains; Bb chain constituting the catalytic component of the C3 and C5 convertases. In terms of biological role, serine protease component of the complement C3 and C5 convertase complexes of the alternative complement pathway. Following cleavage and activation by factor D (CFD), forms the C3 convertase together with complement C3b. As part of the C3 convertase, cleaves and activates C3 into C3a anaphylatoxin and C3b opsonin, the next components of the complement pathways. When an additional complement C3b molecule binds to the C3 convertase, forms the C5 convertase, which cleaves and activates C5 into C5a anaphylatoxin and C5b component of the membrane attack complex. Its function is as follows. Involved in proliferation and differentiation of preactivated B-lymphocytes, rapid spreading of peripheral blood monocytes, stimulation of lymphocyte blastogenesis and lysis of erythrocytes. In Gorilla gorilla gorilla (Western lowland gorilla), this protein is Complement factor B (CFB).